Here is a 954-residue protein sequence, read N- to C-terminus: Patched domain-containing protein 3 (954 aa).

Residues 1 to 20 show a composition bias toward basic and acidic residues; the sequence is MPWVEPKPRPGPEQKPKLTK. The disordered stretch occupies residues 1-103; sequence MPWVEPKPRP…APLPEEETPE (103 aa). Positions 42–57 are enriched in pro residues; sequence QPPPGPLAPPKSPEPS. Over residues 90–102 the composition is skewed to acidic residues; that stretch reads ELDDAPLPEEETP. A helical transmembrane segment spans residues 139–159; sequence WIFLLAPLMLTAALGTGFLYL. 3 N-linked (GlcNAc...) asparagine glycosylation sites follow: Asn-192, Asn-275, and Asn-279. A run of 7 helical transmembrane segments spans residues 297 to 317, 383 to 403, 423 to 443, 447 to 467, 486 to 506, 520 to 540, and 603 to 623; these read LTGFFGGYILGGSLGMGQLLL, VIPVFHLAYILIILFAVTSCF, FLAVVSGFGLLLHIGVPFVII, SPFLILGVGVDDMFIMISAWH, AAVSITITTITNILALYTGIM, GMTLLFCYFYNITCFGAFMAL, and YFVVFIYVLYIISSIYGCFHV. One can recognise an SSD domain in the interval 383-540; it reads VIPVFHLAYI…ITCFGAFMAL (158 aa). N-linked (GlcNAc...) asparagine glycosylation is found at Asn-678, Asn-692, and Asn-737. Transmembrane regions (helical) follow at residues 804-824, 826-846, 858-878, 894-914, and 927-947; these read VLVASAAMFIVSLLLIPYPLC, LWVTFAIGSVIVGVTGFMAFW, LVICIGFSFDFSVHISYAFVS, LLGYPVLQSAISTIIGVCVLA, and IMFLVMIFGAAHGLIFIPVFL.

This sequence belongs to the patched family. In terms of tissue distribution, expressed in germ cells of the testis (at protein level). Detected in blood lymph, colon, small intestine, ovary, testis, prostate, thymus and spleen with highest levels in testis.

The protein localises to the cell projection. Its subcellular location is the cilium. It localises to the flagellum membrane. The protein resides in the endoplasmic reticulum membrane. Functionally, may play a role in sperm development or sperm function. However, does not appear to have an essential role in spermatogenesis or male fertility. The protein is Patched domain-containing protein 3 (PTCHD3) of Homo sapiens (Human).